The primary structure comprises 203 residues: Cytochrome c oxidase assembly protein CtaG (203 aa).

Residues 1-16 (MADQQEKDQKLKKQQR) lie on the Cytoplasmic side of the membrane. The helical; Signal-anchor for type II membrane protein transmembrane segment at 17 to 39 (SNATIAFACLSFFVCMIGAAYAS) threads the bilayer. The Periplasmic portion of the chain corresponds to 40 to 203 (VPLYRIFCQV…VKAETPTNGS (164 aa)).

This sequence belongs to the COX11/CtaG family.

It localises to the cell inner membrane. Exerts its effect at some terminal stage of cytochrome c oxidase synthesis, probably by being involved in the insertion of the copper B into subunit I. The chain is Cytochrome c oxidase assembly protein CtaG from Brucella anthropi (strain ATCC 49188 / DSM 6882 / CCUG 24695 / JCM 21032 / LMG 3331 / NBRC 15819 / NCTC 12168 / Alc 37) (Ochrobactrum anthropi).